Consider the following 153-residue polypeptide: ATP synthase subunit b' (153 aa).

Residues 23 to 40 traverse the membrane as a helical segment; sequence LMAIQVVALTYILNSLFF.

The protein belongs to the ATPase B chain family. In terms of assembly, F-type ATPases have 2 components, F(1) - the catalytic core - and F(0) - the membrane proton channel. F(1) has five subunits: alpha(3), beta(3), gamma(1), delta(1), epsilon(1). F(0) has four main subunits: a(1), b(1), b'(1) and c(10-14). The alpha and beta chains form an alternating ring which encloses part of the gamma chain. F(1) is attached to F(0) by a central stalk formed by the gamma and epsilon chains, while a peripheral stalk is formed by the delta, b and b' chains.

It localises to the cellular thylakoid membrane. F(1)F(0) ATP synthase produces ATP from ADP in the presence of a proton or sodium gradient. F-type ATPases consist of two structural domains, F(1) containing the extramembraneous catalytic core and F(0) containing the membrane proton channel, linked together by a central stalk and a peripheral stalk. During catalysis, ATP synthesis in the catalytic domain of F(1) is coupled via a rotary mechanism of the central stalk subunits to proton translocation. In terms of biological role, component of the F(0) channel, it forms part of the peripheral stalk, linking F(1) to F(0). The b'-subunit is a diverged and duplicated form of b found in plants and photosynthetic bacteria. This chain is ATP synthase subunit b', found in Prochlorococcus marinus (strain MIT 9312).